A 314-amino-acid chain; its full sequence is MNILLANPRGFCAGVDRAISIVELALEIHGAPIYVRHEVVHNRFVVDGLKAKGAVFVEELDEVPDDAIVIFSAHGVSQEVRQEAKRRGLKVFDATCPLVTKVHMQVARASKKGTKAILIGHEGHPEVIGTMGQYDNQDAGIFLVESVEDIAKLPVSSQDDLTFMTQTTLSIDDTSDVIEALKEKYPAIQGPRKNDICYATTNRQQAVRELAKQSQLVLVVGSKNSSNSNRLAELASRMGVPSKLIDGPQDIDPSWLDGVETIGITAGASAPEVLVQSVVEHLKTLGVTGVSNLEGCEENMVFEVPKELRIHEVK.

Cys-12 provides a ligand contact to [4Fe-4S] cluster. His-41 and His-74 together coordinate (2E)-4-hydroxy-3-methylbut-2-enyl diphosphate. 2 residues coordinate dimethylallyl diphosphate: His-41 and His-74. Residues His-41 and His-74 each contribute to the isopentenyl diphosphate site. Residue Cys-96 participates in [4Fe-4S] cluster binding. Residue His-124 participates in (2E)-4-hydroxy-3-methylbut-2-enyl diphosphate binding. His-124 lines the dimethylallyl diphosphate pocket. His-124 serves as a coordination point for isopentenyl diphosphate. Residue Glu-126 is the Proton donor of the active site. Thr-167 contributes to the (2E)-4-hydroxy-3-methylbut-2-enyl diphosphate binding site. Cys-197 serves as a coordination point for [4Fe-4S] cluster. Positions 225, 226, 227, and 269 each coordinate (2E)-4-hydroxy-3-methylbut-2-enyl diphosphate. 4 residues coordinate dimethylallyl diphosphate: Ser-225, Ser-226, Asn-227, and Ser-269. Positions 225, 226, 227, and 269 each coordinate isopentenyl diphosphate.

Belongs to the IspH family. [4Fe-4S] cluster serves as cofactor.

It carries out the reaction isopentenyl diphosphate + 2 oxidized [2Fe-2S]-[ferredoxin] + H2O = (2E)-4-hydroxy-3-methylbut-2-enyl diphosphate + 2 reduced [2Fe-2S]-[ferredoxin] + 2 H(+). The catalysed reaction is dimethylallyl diphosphate + 2 oxidized [2Fe-2S]-[ferredoxin] + H2O = (2E)-4-hydroxy-3-methylbut-2-enyl diphosphate + 2 reduced [2Fe-2S]-[ferredoxin] + 2 H(+). The protein operates within isoprenoid biosynthesis; dimethylallyl diphosphate biosynthesis; dimethylallyl diphosphate from (2E)-4-hydroxy-3-methylbutenyl diphosphate: step 1/1. It participates in isoprenoid biosynthesis; isopentenyl diphosphate biosynthesis via DXP pathway; isopentenyl diphosphate from 1-deoxy-D-xylulose 5-phosphate: step 6/6. In terms of biological role, catalyzes the conversion of 1-hydroxy-2-methyl-2-(E)-butenyl 4-diphosphate (HMBPP) into a mixture of isopentenyl diphosphate (IPP) and dimethylallyl diphosphate (DMAPP). Acts in the terminal step of the DOXP/MEP pathway for isoprenoid precursor biosynthesis. This is 4-hydroxy-3-methylbut-2-enyl diphosphate reductase from Actinobacillus pleuropneumoniae serotype 7 (strain AP76).